The sequence spans 373 residues: Queuine tRNA-ribosyltransferase (373 aa).

Asp-89 (proton acceptor) is an active-site residue. Substrate contacts are provided by residues 89–93, Asp-143, Gln-185, and Gly-212; that span reads DSGGF. The segment at 243-249 is RNA binding; that stretch reads GVGRPED. Catalysis depends on Asp-262, which acts as the Nucleophile. The tract at residues 267 to 271 is RNA binding; important for wobble base 34 recognition; it reads TRNAR. Zn(2+) is bound by residues Cys-300, Cys-302, Cys-305, and His-331.

Belongs to the queuine tRNA-ribosyltransferase family. In terms of assembly, homodimer. Within each dimer, one monomer is responsible for RNA recognition and catalysis, while the other monomer binds to the replacement base PreQ1. Zn(2+) is required as a cofactor.

The catalysed reaction is 7-aminomethyl-7-carbaguanine + guanosine(34) in tRNA = 7-aminomethyl-7-carbaguanosine(34) in tRNA + guanine. The protein operates within tRNA modification; tRNA-queuosine biosynthesis. Its function is as follows. Catalyzes the base-exchange of a guanine (G) residue with the queuine precursor 7-aminomethyl-7-deazaguanine (PreQ1) at position 34 (anticodon wobble position) in tRNAs with GU(N) anticodons (tRNA-Asp, -Asn, -His and -Tyr). Catalysis occurs through a double-displacement mechanism. The nucleophile active site attacks the C1' of nucleotide 34 to detach the guanine base from the RNA, forming a covalent enzyme-RNA intermediate. The proton acceptor active site deprotonates the incoming PreQ1, allowing a nucleophilic attack on the C1' of the ribose to form the product. After dissociation, two additional enzymatic reactions on the tRNA convert PreQ1 to queuine (Q), resulting in the hypermodified nucleoside queuosine (7-(((4,5-cis-dihydroxy-2-cyclopenten-1-yl)amino)methyl)-7-deazaguanosine). This is Queuine tRNA-ribosyltransferase from Marinobacter nauticus (strain ATCC 700491 / DSM 11845 / VT8) (Marinobacter aquaeolei).